We begin with the raw amino-acid sequence, 65 residues long: Large ribosomal subunit protein bL35 (65 aa).

Belongs to the bacterial ribosomal protein bL35 family.

This is Large ribosomal subunit protein bL35 from Clostridium kluyveri (strain NBRC 12016).